Here is a 146-residue protein sequence, read N- to C-terminus: Large ribosomal subunit protein uL15 (146 aa).

Residues 1 to 54 (MNLTDLRPADGSKQSGNFRRGRGHGSGNGKTAGKGHKGQKARSGAPRVGFEGGQ) form a disordered region.

It belongs to the universal ribosomal protein uL15 family. Part of the 50S ribosomal subunit.

Binds to the 23S rRNA. The polypeptide is Large ribosomal subunit protein uL15 (Lachnoclostridium phytofermentans (strain ATCC 700394 / DSM 18823 / ISDg) (Clostridium phytofermentans)).